We begin with the raw amino-acid sequence, 199 residues long: Acireductone dioxygenase 1 (199 aa).

The Fe(2+) site is built by H99, H101, E105, and H144. H99, H101, E105, and H144 together coordinate Ni(2+).

The protein belongs to the acireductone dioxygenase (ARD) family. Fe(2+) is required as a cofactor. It depends on Ni(2+) as a cofactor.

Its subcellular location is the cytoplasm. The protein resides in the nucleus. The enzyme catalyses 1,2-dihydroxy-5-(methylsulfanyl)pent-1-en-3-one + O2 = 4-methylsulfanyl-2-oxobutanoate + formate + 2 H(+). It carries out the reaction 1,2-dihydroxy-5-(methylsulfanyl)pent-1-en-3-one + O2 = 3-(methylsulfanyl)propanoate + CO + formate + 2 H(+). The protein operates within amino-acid biosynthesis; L-methionine biosynthesis via salvage pathway; L-methionine from S-methyl-5-thio-alpha-D-ribose 1-phosphate: step 5/6. Catalyzes 2 different reactions between oxygen and the acireductone 1,2-dihydroxy-3-keto-5-methylthiopentene (DHK-MTPene) depending upon the metal bound in the active site. Fe-containing acireductone dioxygenase (Fe-ARD) produces formate and 2-keto-4-methylthiobutyrate (KMTB), the alpha-ketoacid precursor of methionine in the methionine recycle pathway. Ni-containing acireductone dioxygenase (Ni-ARD) produces methylthiopropionate, carbon monoxide and formate, and does not lie on the methionine recycle pathway. The polypeptide is Acireductone dioxygenase 1 (ARD1) (Oryza sativa subsp. indica (Rice)).